We begin with the raw amino-acid sequence, 130 residues long: Small ribosomal subunit protein uS9 (130 aa).

This sequence belongs to the universal ribosomal protein uS9 family.

In Delftia acidovorans (strain DSM 14801 / SPH-1), this protein is Small ribosomal subunit protein uS9.